A 71-amino-acid chain; its full sequence is Pseudonajatoxin b (71 aa).

Intrachain disulfides connect Cys3–Cys21, Cys14–Cys42, Cys27–Cys31, Cys46–Cys58, and Cys59–Cys64.

The protein belongs to the three-finger toxin family. Long-chain subfamily. Type II alpha-neurotoxin sub-subfamily. As to expression, expressed by the venom gland.

The protein localises to the secreted. Binds with high affinity to muscular (alpha-1/CHRNA1) and neuronal (alpha-7/CHRNA7) nicotinic acetylcholine receptor (nAChR) and inhibits acetylcholine from binding to the receptor, thereby impairing neuromuscular and neuronal transmission. This chain is Pseudonajatoxin b, found in Pseudonaja textilis (Eastern brown snake).